The sequence spans 634 residues: Heat shock 70-related protein 1, mitochondrial (634 aa).

The N-terminal 20 residues, methionine 1–histidine 20, are a transit peptide targeting the mitochondrion. The stretch at serine 538–alanine 614 forms a coiled coil.

It belongs to the heat shock protein 70 family.

It is found in the mitochondrion. The protein is Heat shock 70-related protein 1, mitochondrial (HSP70.1) of Leishmania major.